Reading from the N-terminus, the 471-residue chain is ATP synthase subunit beta (471 aa).

152–159 (GGAGVGKT) lines the ATP pocket.

The protein belongs to the ATPase alpha/beta chains family. In terms of assembly, F-type ATPases have 2 components, CF(1) - the catalytic core - and CF(0) - the membrane proton channel. CF(1) has five subunits: alpha(3), beta(3), gamma(1), delta(1), epsilon(1). CF(0) has three main subunits: a(1), b(2) and c(9-12). The alpha and beta chains form an alternating ring which encloses part of the gamma chain. CF(1) is attached to CF(0) by a central stalk formed by the gamma and epsilon chains, while a peripheral stalk is formed by the delta and b chains.

It localises to the cell membrane. The catalysed reaction is ATP + H2O + 4 H(+)(in) = ADP + phosphate + 5 H(+)(out). Produces ATP from ADP in the presence of a proton gradient across the membrane. The catalytic sites are hosted primarily by the beta subunits. The chain is ATP synthase subunit beta from Herpetosiphon aurantiacus (strain ATCC 23779 / DSM 785 / 114-95).